A 559-amino-acid chain; its full sequence is Small ribosomal subunit protein uS3m (559 aa).

Residues 113–134 are disordered; the sequence is EGTEEERNEVRGRGAGKRVESI. Basic and acidic residues predominate over residues 120 to 134; sequence NEVRGRGAGKRVESI.

This sequence belongs to the universal ribosomal protein uS3 family.

It is found in the mitochondrion. The chain is Small ribosomal subunit protein uS3m (RPS3) from Zea mays (Maize).